The sequence spans 279 residues: 1D-myo-inositol 2-acetamido-2-deoxy-alpha-D-glucopyranoside deacetylase (279 aa).

Zn(2+) is bound by residues H12, D15, and H146.

It belongs to the MshB deacetylase family. It depends on Zn(2+) as a cofactor.

The enzyme catalyses 1D-myo-inositol 2-acetamido-2-deoxy-alpha-D-glucopyranoside + H2O = 1D-myo-inositol 2-amino-2-deoxy-alpha-D-glucopyranoside + acetate. Catalyzes the deacetylation of 1D-myo-inositol 2-acetamido-2-deoxy-alpha-D-glucopyranoside (GlcNAc-Ins) in the mycothiol biosynthesis pathway. This Mycobacteroides abscessus (strain ATCC 19977 / DSM 44196 / CCUG 20993 / CIP 104536 / JCM 13569 / NCTC 13031 / TMC 1543 / L948) (Mycobacterium abscessus) protein is 1D-myo-inositol 2-acetamido-2-deoxy-alpha-D-glucopyranoside deacetylase.